An 804-amino-acid chain; its full sequence is MYNHKVVEKKWQKYWLENKTFKTGTDPEKPKYYVLDMFPYPSGKGLHVGHPEGYTATDIMARMKRAQGYNVLHPMGWDAFGLPAEQYALQTGNDPATFTDENIAHFKKQLQALGFSYDWDREIKTTDPNYYKWTQWIFEQMYKMGLAYEAEVPVNWSPDLGTVVANEEVIDGKTERGGYPVYRRKMRQWMLKITAYADRLLDDLDDLDWPEPIKEMQRNWIGRSVGAQVTFKIKDSDKSFAVFTTRPDTLFGCSYTVLAPENELVKEITSPEQKEAVDAYIKSIESKSDLERTDLNKDKTGVFTGAYAINPVNGEEVPVWISDYVLATYGTGAVMAVPAHDERDYAFATKFDLPIKEVVEGGDISKEAFAGDGVHVNSDFLNGLHNEEAKAKMVDWLTEKGVGEKKVNYKMRDWNFSRQRYWGEPIPVIHWEDGETTLVPEDELPLRLPKESNIKPSGTPESPLANLTDWVNVVDENGRKGKRETNTMPQWAGSSWYFLRYIDPHNDKALADPELLKKWMPVDLYIGGAEHATLHLLYARFWHKVLYDLGVVPTKEPFQKLYNQGLILKNHEKMSKSRGNVVNPDDVVDEYGADSLRTYEMFMGPLNASIDWDDNGPSGVKKFLDRVWRTFVNDLDLDPIPSEKITDKNDGKLDKIYNETVKTVTEHFEELRFNTAISQMMVFMNACQKVDKIPREYAEGFVKLMAPVAPHMMEEIWHVFGHDESVQFAAWPTYDASKLVESTVEMAVTVNGKKRGNFQIAKDASREEAQAAATALTHVKEFLEGKEIKKVIVVPNKIVNIVAK.

Positions 39 to 50 match the 'HIGH' region motif; the sequence is PYPSGKGLHVGH. Positions 573-577 match the 'KMSKS' region motif; the sequence is KMSKS. Lysine 576 is an ATP binding site.

Belongs to the class-I aminoacyl-tRNA synthetase family.

The protein resides in the cytoplasm. The enzyme catalyses tRNA(Leu) + L-leucine + ATP = L-leucyl-tRNA(Leu) + AMP + diphosphate. This is Leucine--tRNA ligase from Lactobacillus delbrueckii subsp. bulgaricus (strain ATCC 11842 / DSM 20081 / BCRC 10696 / JCM 1002 / NBRC 13953 / NCIMB 11778 / NCTC 12712 / WDCM 00102 / Lb 14).